We begin with the raw amino-acid sequence, 620 residues long: uncharacterized protein (620 aa).

Residues arginine 324 to threonine 586 form the Radical SAM core domain. [4Fe-4S] cluster contacts are provided by cysteine 338, cysteine 342, and cysteine 345. Lysine 552 bears the N6-(pyridoxal phosphate)lysine mark.

The protein belongs to the radical SAM superfamily. KamA family. Requires [4Fe-4S] cluster as cofactor. Pyridoxal 5'-phosphate is required as a cofactor.

This is an uncharacterized protein from Methanocaldococcus jannaschii (strain ATCC 43067 / DSM 2661 / JAL-1 / JCM 10045 / NBRC 100440) (Methanococcus jannaschii).